Reading from the N-terminus, the 233-residue chain is UPF0280 protein AF_0649 (233 aa).

It belongs to the UPF0280 family.

This is UPF0280 protein AF_0649 from Archaeoglobus fulgidus (strain ATCC 49558 / DSM 4304 / JCM 9628 / NBRC 100126 / VC-16).